A 326-amino-acid chain; its full sequence is MVWQRQHVLGLADFTPEEYQMVLQTSASFQEVLTRRLPKVPTLQGKVVVTLFFEPSTRTRSSFELAAKRLSADVLNFSPGTSSLSKGETLLDTARTFLAMGSDLLIVRHAQAGVPQQLAAEIDRRGSPVGVLNAGDGLHEHPTQGLLDLFTLCSHLDPRRPRLELLQGIKIAIVGDILHSRVARSDIYALVAAGAEVHLAGPPTLLPKDFAHFVPGHTLPVHWQLEPALEGARFVITLRLQQERMGEFLLPSLQEYHHFFGLTRQRLRLCHPDVKLLHPGPVNRGVELSSEVMEDPGLNLIEQQVTHGVAVRMALLYLMGGGRIPA.

Positions 58 and 59 each coordinate carbamoyl phosphate. Lys-86 contributes to the L-aspartate binding site. The carbamoyl phosphate site is built by Arg-108, His-141, and Gln-144. The L-aspartate site is built by Arg-181 and Arg-239. Carbamoyl phosphate contacts are provided by Gly-280 and Pro-281.

Belongs to the aspartate/ornithine carbamoyltransferase superfamily. ATCase family. In terms of assembly, heterododecamer (2C3:3R2) of six catalytic PyrB chains organized as two trimers (C3), and six regulatory PyrI chains organized as three dimers (R2).

It catalyses the reaction carbamoyl phosphate + L-aspartate = N-carbamoyl-L-aspartate + phosphate + H(+). The protein operates within pyrimidine metabolism; UMP biosynthesis via de novo pathway; (S)-dihydroorotate from bicarbonate: step 2/3. Its function is as follows. Catalyzes the condensation of carbamoyl phosphate and aspartate to form carbamoyl aspartate and inorganic phosphate, the committed step in the de novo pyrimidine nucleotide biosynthesis pathway. The polypeptide is Aspartate carbamoyltransferase catalytic subunit (Synechococcus sp. (strain JA-3-3Ab) (Cyanobacteria bacterium Yellowstone A-Prime)).